Reading from the N-terminus, the 475-residue chain is MNTTLAQQIANEGGVEAWMVAQQHKSLLRFLTCGSVDDGKSTLIGRLLHDTRQIYEDQLSSLHNDSKRHGTQGEKLDLALLVDGLQAEREQGITIDVAYRYFSTEKRKFIIADTPGHEQYTRNMATGASTCDLAILLIDARKGVLDQTRRHSFISTLLGIKHLVVAINKMDLVGFSEETFARIREDYLTFAGQLPGNRDIRFVPLSALEGDNVATQSASMPWYNGPTLLEVLETVEIQRVVDTQPMRFPVQYVNRPNLDFRGYAGTLASGSVKVGQRIKVLPSGVESNVARIVTFDGDLQEAHAGEAITLVLKDEIDISRGDLLLDAGENLPAVQSAAVDVVWMAEQPLSAGQSYDIKIAGKKTRARVDAIRHQVDINNLTQREVESLPLNGIGLVELTFDEPLVLDTYQQNPVTGGLIIIDRLSNVTVGAGLVREPIEHTAATPSGFSDFELELNALIRRHFPHWGARDLLGGK.

Residues 25 to 239 enclose the tr-type G domain; it reads KSLLRFLTCG…EVLETVEIQR (215 aa). The tract at residues 34–41 is G1; it reads GSVDDGKS. Residue 34-41 participates in GTP binding; sequence GSVDDGKS. Residues 92–96 form a G2 region; sequence GITID. Positions 113 to 116 are G3; sequence DTPG. Residues 113-117 and 168-171 each bind GTP; these read DTPGH and NKMD. Positions 168–171 are G4; it reads NKMD. The tract at residues 206-208 is G5; that stretch reads SAL.

It belongs to the TRAFAC class translation factor GTPase superfamily. Classic translation factor GTPase family. CysN/NodQ subfamily. As to quaternary structure, heterodimer composed of CysD, the smaller subunit, and CysN.

It carries out the reaction sulfate + ATP + H(+) = adenosine 5'-phosphosulfate + diphosphate. The protein operates within sulfur metabolism; hydrogen sulfide biosynthesis; sulfite from sulfate: step 1/3. Its function is as follows. With CysD forms the ATP sulfurylase (ATPS) that catalyzes the adenylation of sulfate producing adenosine 5'-phosphosulfate (APS) and diphosphate, the first enzymatic step in sulfur assimilation pathway. APS synthesis involves the formation of a high-energy phosphoric-sulfuric acid anhydride bond driven by GTP hydrolysis by CysN coupled to ATP hydrolysis by CysD. The polypeptide is Sulfate adenylyltransferase subunit 1 (Citrobacter koseri (strain ATCC BAA-895 / CDC 4225-83 / SGSC4696)).